We begin with the raw amino-acid sequence, 106 residues long: MCIGIPLRVLECAPGRALCGDENGVRWIDTRLVEPPAPGDWLLVFLDAAREILDAGRAARIREALRALQAVQAGDPAALAGLFADLDREPQLPPHLQAQLPPKEPT.

Belongs to the HupF/HypC family.

The polypeptide is Hydrogenase expression/formation protein HoxL (hoxL) (Azotobacter vinelandii).